Here is a 101-residue protein sequence, read N- to C-terminus: Urease subunit beta (101 aa).

The protein belongs to the urease beta subunit family. In terms of assembly, heterotrimer of UreA (gamma), UreB (beta) and UreC (alpha) subunits. Three heterotrimers associate to form the active enzyme.

It localises to the cytoplasm. It catalyses the reaction urea + 2 H2O + H(+) = hydrogencarbonate + 2 NH4(+). It participates in nitrogen metabolism; urea degradation; CO(2) and NH(3) from urea (urease route): step 1/1. In Bradyrhizobium sp. (strain ORS 278), this protein is Urease subunit beta.